Reading from the N-terminus, the 26-residue chain is M-lycotoxin-Ls2a (26 aa).

Expressed by the venom gland.

The protein resides in the secreted. The protein localises to the target cell membrane. Its function is as follows. Forms pore that permeabilize the cell membrane. Promotes efflux of calcium from synaptosomes, causes hemolysis, and dissipates voltage gradients across muscle membrane. Potently inhibits the growth of bacteria and yeast. May function both in the prey capture strategy as well as protection from infectious organisms arising from prey ingestion. This chain is M-lycotoxin-Ls2a, found in Lycosa singoriensis (Wolf spider).